Consider the following 839-residue polypeptide: Lon protease (839 aa).

One can recognise a Lon N-terminal domain in the interval 31-224; it reads LFLIPIKSRP…KVLLFLKKEI (194 aa). Residue 377–384 participates in ATP binding; that stretch reads GPPGVGKT. The Lon proteolytic domain maps to 613 to 790; sequence ASVPGTALGL…EEVALLLFDE (178 aa). Catalysis depends on residues S696 and K739. Residues 807–839 form a disordered region; it reads IVNPTRKLSPKKKTTQKQKLSLSKQKGNNQKKK. Low complexity predominate over residues 823–832; the sequence is KQKLSLSKQK.

This sequence belongs to the peptidase S16 family. In terms of assembly, homohexamer. Organized in a ring with a central cavity.

It localises to the cytoplasm. It carries out the reaction Hydrolysis of proteins in presence of ATP.. ATP-dependent serine protease that mediates the selective degradation of mutant and abnormal proteins as well as certain short-lived regulatory proteins. Required for cellular homeostasis and for survival from DNA damage and developmental changes induced by stress. Degrades polypeptides processively to yield small peptide fragments that are 5 to 10 amino acids long. Binds to DNA in a double-stranded, site-specific manner. The chain is Lon protease from Leptospira interrogans serogroup Icterohaemorrhagiae serovar copenhageni (strain Fiocruz L1-130).